The primary structure comprises 602 residues: DNA mismatch repair protein MutL (602 aa).

The protein belongs to the DNA mismatch repair MutL/HexB family.

Functionally, this protein is involved in the repair of mismatches in DNA. It is required for dam-dependent methyl-directed DNA mismatch repair. May act as a 'molecular matchmaker', a protein that promotes the formation of a stable complex between two or more DNA-binding proteins in an ATP-dependent manner without itself being part of a final effector complex. This chain is DNA mismatch repair protein MutL, found in Baumannia cicadellinicola subsp. Homalodisca coagulata.